A 303-amino-acid chain; its full sequence is Glyceraldehyde-3-phosphate dehydrogenase (303 aa).

Residues 6–7 (RI), D28, R72, and T114 contribute to the NAD(+) site. D-glyceraldehyde 3-phosphate is bound by residues 143 to 145 (SCT), T174, 203 to 204 (TG), and R226. The active-site Nucleophile is the C144.

The protein belongs to the glyceraldehyde-3-phosphate dehydrogenase family. In terms of assembly, homotetramer.

The protein localises to the cytoplasm. It carries out the reaction D-glyceraldehyde 3-phosphate + phosphate + NAD(+) = (2R)-3-phospho-glyceroyl phosphate + NADH + H(+). Its pathway is carbohydrate degradation; glycolysis; pyruvate from D-glyceraldehyde 3-phosphate: step 1/5. Its function is as follows. Catalyzes the oxidative phosphorylation of glyceraldehyde 3-phosphate (G3P) to 1,3-bisphosphoglycerate (BPG) using the cofactor NAD. The first reaction step involves the formation of a hemiacetal intermediate between G3P and a cysteine residue, and this hemiacetal intermediate is then oxidized to a thioester, with concomitant reduction of NAD to NADH. The reduced NADH is then exchanged with the second NAD, and the thioester is attacked by a nucleophilic inorganic phosphate to produce BPG. This is Glyceraldehyde-3-phosphate dehydrogenase (gap) from Klebsiella pneumoniae.